The primary structure comprises 242 residues: MLTRKQYELLLLIDGHLRKTGFSPSFEEMKAALNLKSKSGIHRLISALEERGFLRRRHHRARALEVIRMPEAASMPVPKTAPSAPSFASPPAFTPNVIQGSFSSRIAGVRAAQDASAVQLPLYGRIAAGMPIEALRDTSAYLSVPIDMLGNGEHYALEVAGDSMIDAGIFDGDTVIIQQSDLAENGQIVVALIDDTEVTLKRLRRRGKSVALEPANERHETRIFPADRVRVQGRLIGLLRRY.

Residues 26 to 46 constitute a DNA-binding region (H-T-H motif); it reads FEEMKAALNLKSKSGIHRLIS. Residues serine 163 and lysine 201 each act as for autocatalytic cleavage activity in the active site.

It belongs to the peptidase S24 family. Homodimer.

It carries out the reaction Hydrolysis of Ala-|-Gly bond in repressor LexA.. In terms of biological role, represses a number of genes involved in the response to DNA damage (SOS response), including recA and lexA. In the presence of single-stranded DNA, RecA interacts with LexA causing an autocatalytic cleavage which disrupts the DNA-binding part of LexA, leading to derepression of the SOS regulon and eventually DNA repair. This is LexA repressor from Granulibacter bethesdensis (strain ATCC BAA-1260 / CGDNIH1).